The following is a 94-amino-acid chain: Aspartyl/glutamyl-tRNA(Asn/Gln) amidotransferase subunit C (94 aa).

Belongs to the GatC family. In terms of assembly, heterotrimer of A, B and C subunits.

It catalyses the reaction L-glutamyl-tRNA(Gln) + L-glutamine + ATP + H2O = L-glutaminyl-tRNA(Gln) + L-glutamate + ADP + phosphate + H(+). The catalysed reaction is L-aspartyl-tRNA(Asn) + L-glutamine + ATP + H2O = L-asparaginyl-tRNA(Asn) + L-glutamate + ADP + phosphate + 2 H(+). Its function is as follows. Allows the formation of correctly charged Asn-tRNA(Asn) or Gln-tRNA(Gln) through the transamidation of misacylated Asp-tRNA(Asn) or Glu-tRNA(Gln) in organisms which lack either or both of asparaginyl-tRNA or glutaminyl-tRNA synthetases. The reaction takes place in the presence of glutamine and ATP through an activated phospho-Asp-tRNA(Asn) or phospho-Glu-tRNA(Gln). This is Aspartyl/glutamyl-tRNA(Asn/Gln) amidotransferase subunit C from Hydrogenobaculum sp. (strain Y04AAS1).